Here is a 294-residue protein sequence, read N- to C-terminus: Protoheme IX farnesyltransferase (294 aa).

Helical transmembrane passes span S25–V45, L48–W68, A92–G112, V115–L135, A141–V161, F170–F190, V216–A236, Y240–F260, and F272–P292.

This sequence belongs to the UbiA prenyltransferase family. Protoheme IX farnesyltransferase subfamily.

The protein localises to the cell inner membrane. It carries out the reaction heme b + (2E,6E)-farnesyl diphosphate + H2O = Fe(II)-heme o + diphosphate. Its pathway is porphyrin-containing compound metabolism; heme O biosynthesis; heme O from protoheme: step 1/1. In terms of biological role, converts heme B (protoheme IX) to heme O by substitution of the vinyl group on carbon 2 of heme B porphyrin ring with a hydroxyethyl farnesyl side group. The sequence is that of Protoheme IX farnesyltransferase from Myxococcus xanthus (strain DK1622).